The following is a 180-amino-acid chain: Large ribosomal subunit protein uL5 (180 aa).

Belongs to the universal ribosomal protein uL5 family. Part of the 50S ribosomal subunit; part of the 5S rRNA/L5/L18/L25 subcomplex. Contacts the 5S rRNA and the P site tRNA. Forms a bridge to the 30S subunit in the 70S ribosome.

Its function is as follows. This is one of the proteins that bind and probably mediate the attachment of the 5S RNA into the large ribosomal subunit, where it forms part of the central protuberance. In the 70S ribosome it contacts protein S13 of the 30S subunit (bridge B1b), connecting the 2 subunits; this bridge is implicated in subunit movement. Contacts the P site tRNA; the 5S rRNA and some of its associated proteins might help stabilize positioning of ribosome-bound tRNAs. This Mycoplasma mycoides subsp. mycoides SC (strain CCUG 32753 / NCTC 10114 / PG1) protein is Large ribosomal subunit protein uL5.